Consider the following 117-residue polypeptide: uncharacterized protein (117 aa).

The interval 16–56 (FSQSSDGRSNGGGSSSGDSVSTTSDGLLTTGTSPNTSSTSL) is disordered. Residues 31 to 56 (SGDSVSTTSDGLLTTGTSPNTSSTSL) are compositionally biased toward low complexity.

This is an uncharacterized protein from Saccharomyces cerevisiae (strain ATCC 204508 / S288c) (Baker's yeast).